Reading from the N-terminus, the 423-residue chain is Putative competence-damage inducible protein (423 aa).

Belongs to the CinA family.

The polypeptide is Putative competence-damage inducible protein (Streptococcus thermophilus (strain ATCC BAA-491 / LMD-9)).